Here is a 330-residue protein sequence, read N- to C-terminus: D-alanine--D-alanine ligase (330 aa).

The ATP-grasp domain maps to N122–R323. Residue I151–T206 coordinates ATP. 3 residues coordinate Mg(2+): D277, E290, and N292.

Belongs to the D-alanine--D-alanine ligase family. Mg(2+) is required as a cofactor. Mn(2+) serves as cofactor.

Its subcellular location is the cytoplasm. The enzyme catalyses 2 D-alanine + ATP = D-alanyl-D-alanine + ADP + phosphate + H(+). It participates in cell wall biogenesis; peptidoglycan biosynthesis. Its function is as follows. Cell wall formation. This Porphyromonas gingivalis (strain ATCC BAA-308 / W83) protein is D-alanine--D-alanine ligase.